Reading from the N-terminus, the 254-residue chain is 3-deoxy-manno-octulosonate cytidylyltransferase (254 aa).

Belongs to the KdsB family.

Its subcellular location is the cytoplasm. It carries out the reaction 3-deoxy-alpha-D-manno-oct-2-ulosonate + CTP = CMP-3-deoxy-beta-D-manno-octulosonate + diphosphate. The protein operates within nucleotide-sugar biosynthesis; CMP-3-deoxy-D-manno-octulosonate biosynthesis; CMP-3-deoxy-D-manno-octulosonate from 3-deoxy-D-manno-octulosonate and CTP: step 1/1. It functions in the pathway bacterial outer membrane biogenesis; lipopolysaccharide biosynthesis. Its function is as follows. Activates KDO (a required 8-carbon sugar) for incorporation into bacterial lipopolysaccharide in Gram-negative bacteria. The protein is 3-deoxy-manno-octulosonate cytidylyltransferase of Polynucleobacter necessarius subsp. necessarius (strain STIR1).